The following is a 292-amino-acid chain: Expansin-like protein 6 (292 aa).

Positions 1-24 (MIKIIYLIVLLVLLFKNNHIIIKA) are cleaved as a signal peptide. Over 25–267 (DDCPFPQIPI…QITSNSNNIL (243 aa)) the chain is Extracellular. The Expansin-like EG45 domain occupies 47 to 150 (HASCGFEKLT…IKVPCPTYGN (104 aa)). Cystine bridges form between Cys50–Cys80 and Cys83–Cys145. A glycan (N-linked (GlcNAc...) asparagine) is linked at Asn92. A helical transmembrane segment spans residues 268 to 288 (PPSLYIIFLISILFLIINNIF). Topologically, residues 289–292 (SNKY) are cytoplasmic.

It belongs to the expansin family. Expansin A subfamily.

Its subcellular location is the membrane. Its function is as follows. May serve to lubricate the movement of the cellulose microfibrils during cell growth and wall extension and/or may serve to maintain the fluid state of the slug cell wall. The sequence is that of Expansin-like protein 6 (expl6) from Dictyostelium discoideum (Social amoeba).